The primary structure comprises 235 residues: Biosynthetic peptidoglycan transglycosylase (235 aa).

A helical transmembrane segment spans residues 12 to 34; that stretch reads GLGKLLLAALLSTIVSVALLRFI.

Belongs to the glycosyltransferase 51 family.

It is found in the cell inner membrane. The catalysed reaction is [GlcNAc-(1-&gt;4)-Mur2Ac(oyl-L-Ala-gamma-D-Glu-L-Lys-D-Ala-D-Ala)](n)-di-trans,octa-cis-undecaprenyl diphosphate + beta-D-GlcNAc-(1-&gt;4)-Mur2Ac(oyl-L-Ala-gamma-D-Glu-L-Lys-D-Ala-D-Ala)-di-trans,octa-cis-undecaprenyl diphosphate = [GlcNAc-(1-&gt;4)-Mur2Ac(oyl-L-Ala-gamma-D-Glu-L-Lys-D-Ala-D-Ala)](n+1)-di-trans,octa-cis-undecaprenyl diphosphate + di-trans,octa-cis-undecaprenyl diphosphate + H(+). It functions in the pathway cell wall biogenesis; peptidoglycan biosynthesis. Functionally, peptidoglycan polymerase that catalyzes glycan chain elongation from lipid-linked precursors. The polypeptide is Biosynthetic peptidoglycan transglycosylase (Aeromonas hydrophila subsp. hydrophila (strain ATCC 7966 / DSM 30187 / BCRC 13018 / CCUG 14551 / JCM 1027 / KCTC 2358 / NCIMB 9240 / NCTC 8049)).